The sequence spans 169 residues: Shikimate kinase (169 aa).

13–18 contacts ATP; the sequence is GAGKST. A Mg(2+)-binding site is contributed by S17. Substrate is bound by residues D35, R59, and G80. R117 serves as a coordination point for ATP. R136 contacts substrate. R153 is a binding site for ATP.

This sequence belongs to the shikimate kinase family. Monomer. The cofactor is Mg(2+).

The protein resides in the cytoplasm. The enzyme catalyses shikimate + ATP = 3-phosphoshikimate + ADP + H(+). The protein operates within metabolic intermediate biosynthesis; chorismate biosynthesis; chorismate from D-erythrose 4-phosphate and phosphoenolpyruvate: step 5/7. Its function is as follows. Catalyzes the specific phosphorylation of the 3-hydroxyl group of shikimic acid using ATP as a cosubstrate. This Corynebacterium glutamicum (strain ATCC 13032 / DSM 20300 / JCM 1318 / BCRC 11384 / CCUG 27702 / LMG 3730 / NBRC 12168 / NCIMB 10025 / NRRL B-2784 / 534) protein is Shikimate kinase.